Reading from the N-terminus, the 161-residue chain is Kininogen-2 (161 aa).

The N-terminal stretch at 1–23 (MRLWFCLSFFVVLCLEHFPGTLA) is a signal peptide. Cysteine 150 and cysteine 156 are oxidised to a cystine. A Valine amide modification is found at valine 160.

Belongs to the bradykinin-related peptide family. As to expression, expressed by the skin glands.

It localises to the secreted. Inhibits ACE with a Ki of 1.6 uM, and targets B2 bradykinin receptor (BDKRB2). Provokes contraction of smooth muscle preparation (ileum). In vivo, induces an early hyperalgesic effects in living rats after intraplantar injection. In terms of biological role, inhibits the bradykinin-induced in vitro relaxation of rat arterial smooth muscle and constriction of intestinal smooth muscle. May target bradykinin receptors (BDKRB). The sequence is that of Kininogen-2 from Bombina orientalis (Oriental fire-bellied toad).